The primary structure comprises 144 residues: Tryparedoxin (144 aa).

The region spanning 2 to 144 (SGLAKYLPGA…PDGANFPWPN (143 aa)) is the Thioredoxin domain. A disulfide bridge connects residues Cys40 and Cys43.

The protein belongs to the thioredoxin family.

Acts as a thiol-disulfide oxidoreductase. It is spontaneously reduced by trypanothione. This is Tryparedoxin from Trypanosoma brucei brucei.